A 149-amino-acid chain; its full sequence is Urease accessory protein UreE (149 aa).

This sequence belongs to the UreE family.

The protein resides in the cytoplasm. In terms of biological role, involved in urease metallocenter assembly. Binds nickel. Probably functions as a nickel donor during metallocenter assembly. The chain is Urease accessory protein UreE from Prochlorococcus marinus (strain MIT 9215).